We begin with the raw amino-acid sequence, 391 residues long: Toluene efflux pump periplasmic linker protein TtgG (391 aa).

An N-terminal signal peptide occupies residues 1-32 (MRAERWSQTVRQIRSPRALRVIPLTALMLISG). Residue cysteine 33 is the site of N-palmitoyl cysteine attachment. Cysteine 33 carries S-diacylglycerol cysteine lipidation. Positions 107–136 (RTYEAQLRRAEANRTSAQNLARRYETLLKT) form a coiled coil.

It belongs to the membrane fusion protein (MFP) (TC 8.A.1) family.

The protein resides in the cell inner membrane. In terms of biological role, the periplasmic linker component of an organic solvent efflux pump. Involved in export of a number of organic solvents, including toluene and styrene. This is the most important solvent efflux pump in this strain, although it can export AMP and some antibiotics. The sequence is that of Toluene efflux pump periplasmic linker protein TtgG (ttgG) from Pseudomonas putida (strain DOT-T1E).